A 72-amino-acid chain; its full sequence is NAD(P)H-quinone oxidoreductase subunit O (72 aa).

This sequence belongs to the complex I NdhO subunit family. As to quaternary structure, NDH-1 can be composed of about 15 different subunits; different subcomplexes with different compositions have been identified which probably have different functions.

It is found in the cellular thylakoid membrane. It carries out the reaction a plastoquinone + NADH + (n+1) H(+)(in) = a plastoquinol + NAD(+) + n H(+)(out). It catalyses the reaction a plastoquinone + NADPH + (n+1) H(+)(in) = a plastoquinol + NADP(+) + n H(+)(out). Functionally, NDH-1 shuttles electrons from an unknown electron donor, via FMN and iron-sulfur (Fe-S) centers, to quinones in the respiratory and/or the photosynthetic chain. The immediate electron acceptor for the enzyme in this species is believed to be plastoquinone. Couples the redox reaction to proton translocation, and thus conserves the redox energy in a proton gradient. Cyanobacterial NDH-1 also plays a role in inorganic carbon-concentration. The polypeptide is NAD(P)H-quinone oxidoreductase subunit O (Crocosphaera subtropica (strain ATCC 51142 / BH68) (Cyanothece sp. (strain ATCC 51142))).